The primary structure comprises 55 residues: UPF0391 membrane protein NE1120 (55 aa).

A run of 2 helical transmembrane segments spans residues Met-4–Ala-24 and Leu-27–Leu-47.

The protein belongs to the UPF0391 family.

The protein resides in the cell membrane. This chain is UPF0391 membrane protein NE1120, found in Nitrosomonas europaea (strain ATCC 19718 / CIP 103999 / KCTC 2705 / NBRC 14298).